The primary structure comprises 103 residues: Large ribosomal subunit protein bL21 (103 aa).

This sequence belongs to the bacterial ribosomal protein bL21 family. As to quaternary structure, part of the 50S ribosomal subunit. Contacts protein L20.

This protein binds to 23S rRNA in the presence of protein L20. The sequence is that of Large ribosomal subunit protein bL21 from Ruminiclostridium cellulolyticum (strain ATCC 35319 / DSM 5812 / JCM 6584 / H10) (Clostridium cellulolyticum).